The following is a 260-amino-acid chain: Glutamate racemase (260 aa).

Residues 14-15 and 46-47 contribute to the substrate site; these read DS and YG. The Proton donor/acceptor role is filled by Cys-77. Substrate is bound at residue 78-79; that stretch reads NT. The active-site Proton donor/acceptor is the Cys-188. 189 to 190 is a binding site for substrate; that stretch reads TH.

The protein belongs to the aspartate/glutamate racemases family.

The enzyme catalyses L-glutamate = D-glutamate. It participates in cell wall biogenesis; peptidoglycan biosynthesis. Functionally, provides the (R)-glutamate required for cell wall biosynthesis. In Clostridium perfringens (strain 13 / Type A), this protein is Glutamate racemase.